The following is a 321-amino-acid chain: Tetraacyldisaccharide 4'-kinase (321 aa).

54 to 61 (SVGGTGKT) is an ATP binding site.

The protein belongs to the LpxK family.

It catalyses the reaction a lipid A disaccharide + ATP = a lipid IVA + ADP + H(+). The protein operates within glycolipid biosynthesis; lipid IV(A) biosynthesis; lipid IV(A) from (3R)-3-hydroxytetradecanoyl-[acyl-carrier-protein] and UDP-N-acetyl-alpha-D-glucosamine: step 6/6. Functionally, transfers the gamma-phosphate of ATP to the 4'-position of a tetraacyldisaccharide 1-phosphate intermediate (termed DS-1-P) to form tetraacyldisaccharide 1,4'-bis-phosphate (lipid IVA). The sequence is that of Tetraacyldisaccharide 4'-kinase from Rickettsia bellii (strain OSU 85-389).